A 216-amino-acid chain; its full sequence is Redox-sensing transcriptional repressor Rex (216 aa).

The H-T-H motif DNA-binding region spans glutamine 20 to phenylalanine 59. Glycine 94–glycine 99 contributes to the NAD(+) binding site.

This sequence belongs to the transcriptional regulatory Rex family. As to quaternary structure, homodimer.

It is found in the cytoplasm. Functionally, modulates transcription in response to changes in cellular NADH/NAD(+) redox state. The polypeptide is Redox-sensing transcriptional repressor Rex (Lactococcus lactis subsp. cremoris (Streptococcus cremoris)).